Consider the following 148-residue polypeptide: Nucleoside diphosphate kinase (148 aa).

Positions 9, 57, 85, 91, 102, and 112 each coordinate ATP. Position 91 is a phosphothreonine (threonine 91). The active-site Pros-phosphohistidine intermediate is the histidine 115. Serine 122 is modified (phosphoserine).

This sequence belongs to the NDK family. As to quaternary structure, homotetramer. Mg(2+) serves as cofactor.

Its subcellular location is the cytoplasm. The enzyme catalyses a 2'-deoxyribonucleoside 5'-diphosphate + ATP = a 2'-deoxyribonucleoside 5'-triphosphate + ADP. It carries out the reaction a ribonucleoside 5'-diphosphate + ATP = a ribonucleoside 5'-triphosphate + ADP. Functionally, major role in the synthesis of nucleoside triphosphates other than ATP. The ATP gamma phosphate is transferred to the NDP beta phosphate via a ping-pong mechanism, using a phosphorylated active-site intermediate. The protein is Nucleoside diphosphate kinase of Oceanobacillus iheyensis (strain DSM 14371 / CIP 107618 / JCM 11309 / KCTC 3954 / HTE831).